Reading from the N-terminus, the 180-residue chain is uncharacterized protein (180 aa).

The tract at residues 138-180 (SVMPVPMPQQNSDNGSTPHIVDSSKSKDKSSNDGDNGVFTGDE) is disordered. A compositionally biased stretch (polar residues) spans 145–154 (PQQNSDNGST). Positions 159–169 (DSSKSKDKSSN) are enriched in basic and acidic residues.

This is an uncharacterized protein from Acidianus filamentous virus 2 (isolate Italy/Pozzuoli) (AFV-2).